Reading from the N-terminus, the 283-residue chain is Plasma membrane ascorbate-dependent reductase CYBRD1 (283 aa).

Topologically, residues 1–5 are cytoplasmic; that stretch reads MEGYK. The helical transmembrane segment at 6–30 threads the bilayer; sequence SFLVFLVSSLLLGFLGVIFTLVWVL. The Cytochrome b561 domain occupies 13-218; the sequence is SSLLLGFLGV…FGGLVVWMVT (206 aa). Residues 31–45 lie on the Extracellular side of the membrane; the sequence is HWREGLGWDGGAAEF. Residues 46–67 traverse the membrane as a helical segment; that stretch reads NWHPVLVTSGFIFIQGIAIIVY. The heme b site is built by His-48, Arg-68, and Lys-77. The Cytoplasmic segment spans residues 68 to 76; that stretch reads RLPWTWNCS. L-ascorbate is bound by residues Lys-77 and Lys-81. Residues 77–103 traverse the membrane as a helical segment; it reads KLLMKFIHAGLHLTAFVFTIVALVAVF. His-84 serves as a coordination point for heme b. Residues 104–116 are Extracellular-facing; the sequence is DFHNAKNIPNMYS. His-106 serves as a coordination point for Fe(3+). Heme b contacts are provided by residues 113–116 and His-118; that span reads NMYS. The chain crosses the membrane as a helical span at residues 117 to 142; sequence LHSWIGLTVVILYALQLVLGVSIYLL. Topologically, residues 143–149 are cytoplasmic; it reads PFARDTL. L-ascorbate is bound at residue Arg-150. Residues 150–177 form a helical membrane-spanning segment; the sequence is RAALMPVHVYSGLLIFGTVIATALMGIT. Residues His-157 and Glu-178 each contribute to the heme b site. Over 178 to 195 the chain is Extracellular; the sequence is EKLIFSLKEPPYSKMPPE. Residues 196 to 220 traverse the membrane as a helical segment; the sequence is AIFVNTFGLIILVFGGLVVWMVTTP. At 221-283 the chain is on the cytoplasmic side; sequence AWKRPREQEI…LDDAGQRSTM (63 aa). Lys-223 is a heme b binding site. Residues 234–263 are disordered; the sequence is NPTVSSPDGTEEGSTITDCSNTEKSDVELN. Residues 235–253 show a composition bias toward polar residues; that stretch reads PTVSSPDGTEEGSTITDCS. Over residues 254-263 the composition is skewed to basic and acidic residues; that stretch reads NTEKSDVELN.

As to quaternary structure, homodimer. Requires heme b as cofactor.

It localises to the cell membrane. The protein resides in the apical cell membrane. It carries out the reaction Fe(3+)(out) + L-ascorbate(in) = monodehydro-L-ascorbate radical(in) + Fe(2+)(out) + H(+). It catalyses the reaction Cu(2+)(out) + L-ascorbate(in) = Cu(+)(out) + monodehydro-L-ascorbate radical(in) + H(+). The catalysed reaction is monodehydro-L-ascorbate radical(out) + L-ascorbate(in) = monodehydro-L-ascorbate radical(in) + L-ascorbate(out). In terms of biological role, plasma membrane reductase that uses cytoplasmic ascorbate as an electron donor to reduce extracellular Fe(3+) into Fe(2+). It is also able to reduce extracellular monodehydro-L-ascorbate and may be involved in extracellular ascorbate regeneration. May also function as a cupric transmembrane reductase. The protein is Plasma membrane ascorbate-dependent reductase CYBRD1 (cybrd1) of Xenopus tropicalis (Western clawed frog).